Reading from the N-terminus, the 511-residue chain is Vicilin-like seed storage protein At2g28490 (511 aa).

Residues 1–27 (MEKNKRAIGFLLLVVLINGVMMTRSNG) form the signal peptide. Residues 54-81 (GGGGGGAWGGEGEGGGEWGGGGEGGGGG) form a disordered region. Cupin type-1 domains lie at 86-238 (FMMR…PELQ) and 329-480 (YNIY…ETMR). N-linked (GlcNAc...) asparagine glycosylation is found at asparagine 231, asparagine 369, asparagine 403, and asparagine 464.

The protein belongs to the 7S seed storage protein family.

In terms of biological role, seed storage protein. The chain is Vicilin-like seed storage protein At2g28490 from Arabidopsis thaliana (Mouse-ear cress).